We begin with the raw amino-acid sequence, 137 residues long: Putative pre-16S rRNA nuclease (137 aa).

It belongs to the YqgF nuclease family.

The protein resides in the cytoplasm. In terms of biological role, could be a nuclease involved in processing of the 5'-end of pre-16S rRNA. This is Putative pre-16S rRNA nuclease from Clostridium botulinum (strain Alaska E43 / Type E3).